A 785-amino-acid polypeptide reads, in one-letter code: Solute carrier family 45 member 4 (785 aa).

Residues 1–43 (MKMAPQNADSESMQVQELPVPLPDPQKPRDPEAETQEETTSEG) are disordered. Helical transmembrane passes span 64–84 (EFCY…IGLP), 87–107 (YYSL…PLIG), 124–144 (ILAL…GSAI), 156–176 (PIGI…ADAT), 197–217 (LNIH…LGGL), and 234–254 (VLFF…LFSI). 2 disordered regions span residues 259–309 (YSPQ…VQSE) and 401–430 (KVPN…SGSM). Phosphoserine is present on residues S442 and S472. The segment at 478 to 505 (DLQQRQRSRHRNQSGATASSGDTESEEG) is disordered. The segment covering 490–499 (QSGATASSGD) has biased composition (low complexity). S502 is modified (phosphoserine). 6 helical membrane-spanning segments follow: residues 525–545 (LMWL…EAVF), 577–597 (MGCW…ALLQ), 609–629 (IIYM…AMFP), 631–651 (VYVA…ISYC), 683–703 (ILSC…GGVV), and 709–729 (IVVI…TATF). A disordered region spans residues 741 to 772 (KEEQKGLSSGPAGEGEGGAGSEKPTVLKLSRK). Residue S749 is modified to Phosphoserine.

Belongs to the glycoside-pentoside-hexuronide (GPH) cation symporter transporter (TC 2.A.2) family. Ubiquitously expressed.

The protein localises to the membrane. It catalyses the reaction sucrose(out) + H(+)(out) = sucrose(in) + H(+)(in). In terms of biological role, proton-associated sucrose transporter. May be able to transport also glucose and fructose. This is Solute carrier family 45 member 4 (Slc45a4) from Mus musculus (Mouse).